Reading from the N-terminus, the 209-residue chain is Holliday junction branch migration complex subunit RuvA (209 aa).

Residues 1–70 (MFSYLKGEAI…EDGTYLYGFA (70 aa)) are domain I. A domain II region spans residues 71–149 (SAAARDLFRQ…QWRDQFSLPD (79 aa)). The interval 149 to 153 (DTAAQ) is flexible linker. The interval 154-209 (PNAAVHEDLELTLLALGYQETEIRGAIATLSQDSILLQNDNADEWIRRAITLLSQT) is domain III.

This sequence belongs to the RuvA family. Homotetramer. Forms an RuvA(8)-RuvB(12)-Holliday junction (HJ) complex. HJ DNA is sandwiched between 2 RuvA tetramers; dsDNA enters through RuvA and exits via RuvB. An RuvB hexamer assembles on each DNA strand where it exits the tetramer. Each RuvB hexamer is contacted by two RuvA subunits (via domain III) on 2 adjacent RuvB subunits; this complex drives branch migration. In the full resolvosome a probable DNA-RuvA(4)-RuvB(12)-RuvC(2) complex forms which resolves the HJ.

The protein localises to the cytoplasm. The RuvA-RuvB-RuvC complex processes Holliday junction (HJ) DNA during genetic recombination and DNA repair, while the RuvA-RuvB complex plays an important role in the rescue of blocked DNA replication forks via replication fork reversal (RFR). RuvA specifically binds to HJ cruciform DNA, conferring on it an open structure. The RuvB hexamer acts as an ATP-dependent pump, pulling dsDNA into and through the RuvAB complex. HJ branch migration allows RuvC to scan DNA until it finds its consensus sequence, where it cleaves and resolves the cruciform DNA. This Picosynechococcus sp. (strain ATCC 27264 / PCC 7002 / PR-6) (Agmenellum quadruplicatum) protein is Holliday junction branch migration complex subunit RuvA.